Reading from the N-terminus, the 131-residue chain is Global transcriptional regulator Spx (131 aa).

A disulfide bridge connects residues Cys-10 and Cys-13.

It belongs to the ArsC family. Spx subfamily. As to quaternary structure, interacts with the C-terminal domain of the alpha subunit of the RNAP.

It is found in the cytoplasm. Global transcriptional regulator that plays a key role in stress response and exerts either positive or negative regulation of genes. Acts by interacting with the C-terminal domain of the alpha subunit of the RNA polymerase (RNAP). This interaction can enhance binding of RNAP to the promoter region of target genes and stimulate their transcription, or block interaction of RNAP with activator. In Staphylococcus haemolyticus (strain JCSC1435), this protein is Global transcriptional regulator Spx.